The sequence spans 203 residues: Peptidyl-tRNA hydrolase (203 aa).

TRNA is bound at residue Tyr18. His23 serves as the catalytic Proton acceptor. Tyr69, Asn71, and Asn117 together coordinate tRNA.

Belongs to the PTH family. As to quaternary structure, monomer.

The protein localises to the cytoplasm. It carries out the reaction an N-acyl-L-alpha-aminoacyl-tRNA + H2O = an N-acyl-L-amino acid + a tRNA + H(+). Its function is as follows. Hydrolyzes ribosome-free peptidyl-tRNAs (with 1 or more amino acids incorporated), which drop off the ribosome during protein synthesis, or as a result of ribosome stalling. Catalyzes the release of premature peptidyl moieties from peptidyl-tRNA molecules trapped in stalled 50S ribosomal subunits, and thus maintains levels of free tRNAs and 50S ribosomes. The sequence is that of Peptidyl-tRNA hydrolase from Parasynechococcus marenigrum (strain WH8102).